Consider the following 334-residue polypeptide: Phosphate acyltransferase (334 aa).

The protein belongs to the PlsX family. In terms of assembly, homodimer. Probably interacts with PlsY.

It localises to the cytoplasm. It carries out the reaction a fatty acyl-[ACP] + phosphate = an acyl phosphate + holo-[ACP]. Its pathway is lipid metabolism; phospholipid metabolism. Its function is as follows. Catalyzes the reversible formation of acyl-phosphate (acyl-PO(4)) from acyl-[acyl-carrier-protein] (acyl-ACP). This enzyme utilizes acyl-ACP as fatty acyl donor, but not acyl-CoA. This chain is Phosphate acyltransferase, found in Streptococcus thermophilus (strain CNRZ 1066).